Reading from the N-terminus, the 624-residue chain is Prickle planar cell polarity protein 3 (624 aa).

Residues Met-1 to Gly-12 show a composition bias toward basic residues. The interval Met-1–Pro-26 is disordered. In terms of domain architecture, PET spans Ser-74–Thr-182. 3 LIM zinc-binding domains span residues Ala-184–Pro-249, Arg-250–Glu-309, and Tyr-310–Thr-373. The interval Glu-371–Arg-617 is disordered. Over residues Ser-383–Ser-409 the composition is skewed to low complexity. Pro residues predominate over residues Pro-447–Ala-458. Phosphoserine occurs at positions 475 and 491. Positions Ser-509–His-541 are enriched in basic residues. Over residues Leu-545–Glu-564 the composition is skewed to low complexity. Residues Arg-587–Ala-601 are compositionally biased toward polar residues.

The protein belongs to the prickle / espinas / testin family. As to quaternary structure, interacts with VANGL2 via its C-terminus. The VANGL2-dependent membrane recruitment of PRICKLE3 is a prerequisite for its polarization. Interacts with WTIP. WTIP is involved in the recruitment of PRICKLE3 to the basal body. Interacts with MT-ATP8, a component of the mitochondrial complex V. In terms of tissue distribution, widely expressed.

Its subcellular location is the cytoplasm. The protein localises to the cell membrane. It is found in the mitochondrion. Its function is as follows. Involved in the planar cell polarity (PCP) pathway that is essential for the polarization of epithelial cells during morphogenetic processes, including gastrulation and neurulation. PCP is maintained by two molecular modules, the global and the core modules, PRICKLE3 being part of the core module. Distinct complexes of the core module segregate to opposite sides of the cell, where they interact with the opposite complex in the neighboring cell at or near the adherents junctions. Involved in the organization of the basal body. Involved in cilia growth and positioning. Required for proper assembly, stability, and function of mitochondrial membrane ATP synthase (mitochondrial complex V). The sequence is that of Prickle planar cell polarity protein 3 from Mus musculus (Mouse).